Reading from the N-terminus, the 133-residue chain is MTSTPQPSRPSSLDAEIAARLKRSADGLVPAIAQQYDTGEVLMLGWMDDEALHRTLTTGRCTYWSRSRGEYWVKGDTSGHVQYVKSVALDCDADTVLVKVDQVGAACHTGAHTCFDADVLLKDGDSGVPAADQ.

Asp90 is a binding site for Mg(2+). Cys91 provides a ligand contact to Zn(2+). Asp92 and Asp94 together coordinate Mg(2+). Zn(2+)-binding residues include Cys107 and Cys114.

The protein belongs to the PRA-CH family. As to quaternary structure, homodimer. Mg(2+) is required as a cofactor. Zn(2+) serves as cofactor.

The protein resides in the cytoplasm. It catalyses the reaction 1-(5-phospho-beta-D-ribosyl)-5'-AMP + H2O = 1-(5-phospho-beta-D-ribosyl)-5-[(5-phospho-beta-D-ribosylamino)methylideneamino]imidazole-4-carboxamide. It participates in amino-acid biosynthesis; L-histidine biosynthesis; L-histidine from 5-phospho-alpha-D-ribose 1-diphosphate: step 3/9. Catalyzes the hydrolysis of the adenine ring of phosphoribosyl-AMP. In Streptomyces avermitilis (strain ATCC 31267 / DSM 46492 / JCM 5070 / NBRC 14893 / NCIMB 12804 / NRRL 8165 / MA-4680), this protein is Phosphoribosyl-AMP cyclohydrolase.